A 225-amino-acid polypeptide reads, in one-letter code: MEKLLWCFLTLVSFSNMSDQAGMHKKAFVFPKESDNSYVSLNAQLKKPLKAFTVCLYFYTDLSMTRGYSIFSYATRRQFNEILLFWSKDIGYSFSVGGDEIIFKVSDIPVDPTHLCASWESSTGIAELWVDGKPMVRKSLKKGYILGPEASIILGQDQDSFGGSFEKQQSLVGDIGNVNMWDYALSPEEINTIYAGGTFSPNVLDWRELTYQVRGEVHVKPQLWP.

Positions 1–20 (MEKLLWCFLTLVSFSNMSDQ) are cleaved as a signal peptide. Residues 24 to 225 (HKKAFVFPKE…EVHVKPQLWP (202 aa)) form the Pentraxin (PTX) domain. Residues C55 and C116 are joined by a disulfide bond. 4 residues coordinate Ca(2+): N80, Q158, D159, and Q169.

The protein belongs to the pentraxin family. In terms of assembly, homopentamer. Pentraxin (or pentaxin) have a discoid arrangement of 5 non-covalently bound subunits. Interacts with FCN1; may regulate monocyte activation by FCN1. It depends on Ca(2+) as a cofactor. In terms of tissue distribution, found in plasma.

It localises to the secreted. Functionally, displays several functions associated with host defense: it promotes agglutination, bacterial capsular swelling, phagocytosis and complement fixation through its calcium-dependent binding to phosphorylcholine. Can interact with DNA and histones and may scavenge nuclear material released from damaged circulating cells. The polypeptide is C-reactive protein (CRP) (Oryctolagus cuniculus (Rabbit)).